A 558-amino-acid chain; its full sequence is Potassium-transporting ATPase potassium-binding subunit (558 aa).

11 helical membrane-spanning segments follow: residues 1 to 21, 58 to 78, 85 to 105, 130 to 150, 179 to 199, 245 to 265, 279 to 299, 374 to 394, 416 to 436, 484 to 504, and 527 to 547; these read MDTL…VLVH, WPAY…VVYG, FLPY…NTAV, GLAV…IALV, LSLV…FAGF, PTAW…FSLP, TAIA…LTLF, GLYG…LLVG, ILVT…IPAV, ALGV…LALA, and FVGL…FPVL.

The protein belongs to the KdpA family. As to quaternary structure, the system is composed of three essential subunits: KdpA, KdpB and KdpC.

It localises to the cell membrane. In terms of biological role, part of the high-affinity ATP-driven potassium transport (or Kdp) system, which catalyzes the hydrolysis of ATP coupled with the electrogenic transport of potassium into the cytoplasm. This subunit binds the extracellular potassium ions and delivers the ions to the membrane domain of KdpB through an intramembrane tunnel. This is Potassium-transporting ATPase potassium-binding subunit from Clavibacter sepedonicus (Clavibacter michiganensis subsp. sepedonicus).